The sequence spans 154 residues: Transcriptional repressor NrdR (154 aa).

A zinc finger lies at 3–34 (CPFCGANDTKVIDSRLVAEGEQVRRRRECVAC). Positions 49 to 139 (PRLIKQDGTR…VYRRFQDLDE (91 aa)) constitute an ATP-cone domain.

The protein belongs to the NrdR family. It depends on Zn(2+) as a cofactor.

Negatively regulates transcription of bacterial ribonucleotide reductase nrd genes and operons by binding to NrdR-boxes. The polypeptide is Transcriptional repressor NrdR (Pseudomonas entomophila (strain L48)).